Here is a 100-residue protein sequence, read N- to C-terminus: Osteocalcin (100 aa).

Residues 1 to 23 form the signal peptide; it reads MRTPMLLALLALATLCLAGRADA. Residues 24–51 constitute a propeptide that is removed on maturation; that stretch reads KPGDAESGKGAAFVSKQEGSEVVKRLRR. Residues 52–98 form the Gla domain; sequence YLDHWLGAPAPYPDPLEPKREVCELNPDCDELADHIGFQEAYRRFYG. Residue Pro60 is modified to 4-hydroxyproline. Ca(2+) contacts are provided by Glu68, Glu72, Glu75, and Asp81. 4-carboxyglutamate is present on residues Glu68, Glu72, and Glu75. Cysteines 74 and 80 form a disulfide.

Belongs to the osteocalcin/matrix Gla protein family. Post-translationally, gamma-carboxyglutamate residues are formed by vitamin K dependent carboxylation by GGCX. These residues are essential for the binding of calcium. Decarboxylation promotes the hormone activity.

Its subcellular location is the secreted. In terms of biological role, the carboxylated form is one of the main organic components of the bone matrix, which constitutes 1-2% of the total bone protein. It acts as a negative regulator of bone formation and is required to limit bone formation without impairing bone resorption or mineralization. The carboxylated form binds strongly to apatite and calcium. Its function is as follows. The uncarboxylated form acts as a hormone secreted by osteoblasts, which regulates different cellular processes, such as energy metabolism, male fertility and brain development. Regulates of energy metabolism by acting as a hormone favoring pancreatic beta-cell proliferation, insulin secretion and sensitivity and energy expenditure. Uncarboxylated osteocalcin hormone also promotes testosterone production in the testes: acts as a ligand for G protein-coupled receptor GPRC6A at the surface of Leydig cells, initiating a signaling response that promotes the expression of enzymes required for testosterone synthesis in a CREB-dependent manner. Also acts as a regulator of brain development: osteocalcin hormone crosses the blood-brain barrier and acts as a ligand for GPR158 on neurons, initiating a signaling response that prevents neuronal apoptosis in the hippocampus, favors the synthesis of all monoamine neurotransmitters and inhibits that of gamma-aminobutyric acid (GABA). Osteocalcin also crosses the placenta during pregnancy and maternal osteocalcin is required for fetal brain development. The sequence is that of Osteocalcin (BGLAP) from Bos taurus (Bovine).